Consider the following 233-residue polypeptide: Nickel import system ATP-binding protein NikE (233 aa).

The ABC transporter domain occupies isoleucine 2–valine 228. Glycine 35–serine 42 is a binding site for ATP.

The protein belongs to the ABC transporter superfamily. In terms of assembly, the complex is composed of two ATP-binding proteins (NikD and NikE), two transmembrane proteins (NikB and NikC) and a solute-binding protein (NikA).

The protein resides in the cell membrane. It catalyses the reaction Ni(2+)(out) + ATP + H2O = Ni(2+)(in) + ADP + phosphate + H(+). Its function is as follows. Part of the ABC transporter complex NikABCDE (Opp2) involved in nickel import. Probably responsible for energy coupling to the transport system. The chain is Nickel import system ATP-binding protein NikE from Staphylococcus aureus (strain MRSA252).